Reading from the N-terminus, the 1099-residue chain is MRMSDTVTVKDETATMKDLEAEVKDTTRVENLIKSENYGKILVEKNEHCIENNIDLQRPLQSFGQTGKRSKSSSKLKLVRSLAVCEESPPPPAPEISQENQEKIQIQLTQSFEKEEKPSKDEAEKEKASDKLPRKMLSRDSSQEYTDSTGIDLHEFLVNTLKNNPRDRMMLLKLEQEILDFIGNNESPRKKFPPMTSYHRMLLHRVAAYFGLDHNVDQSGKSVIVNKTSNTRIPDQKFNEHIKDDKGEDFQKRYILKRDNSSFDKDDNQMRIRLKDDRRSKSIEEREEEYQRARDRIFSQDSLCSQENYIIDKRLQDEDASSTQQRRQIFRVNKDASGRSTNSHQSSTENELKYSEPRPWSSTDSDSSLRNLKPAVTKASSFSGISVLTRGDSSGSSKSIGRLSKTGSESSGSVGSSTGSLSHIQQPLPGTALSQSSHGAPVVYPTVSTHSSLSFDGGLNGQVASPSTSFFLLPLEAAGIPPGSILINPQTGQPFINPDGSPVVYNPPMTQQPVRSQVPGPPQPPLPAPPQQPAANHIFSQDNLGSQFSHMSLARQPSADGSDPHAAMFQSTVVLQSPQQSGYIMTAAPPPHPPPPPPPPPPPPPLPPGQPVPTAGYPASGHPVSQPVLQQQGYIQQPSPQMPACYCAPGHYHSSQPQYRPVPSVHYNSHLNQPLPQPAQQTGYQVIPNQQQNYQGIVGVQQPQSQSLVSGQPNSIGNQIQGVVIPYTSVPTYQVSLPQGSQGIPHQTYQQPVMFPNQSNQGSMPTTGMPVYYSVIPPGQQNNLSSSVGYLQHPGSEQVQFPRTTSPCSSQQLQGHQCTAGPPPPPGGGMVMMQLSVPNNPQSCAHSPPQWKQNKYYCDHQRGQKCVEFSSVDNIVQHSPQLSSPIISPAQSPAPAQLSTLKTVRPSGPPLSIMPQFSRPFVPGQGDSRYPLLGQPLQYNPPAVLHGHIPNQQGQPGSRHGNRGRRQAKKAASTDLGAGETVVGKVLEITELPDGITRMEAEKLFGELFKIGAKIRWLRDPQSQPRRHPLCCGSGDNTANPERSKPSDLASTYTVLATFPSISAAQNALKKQINSVNKFKLRTSKKHYDFHILERASSQ.

The interval Ser111 to Thr146 is disordered. Over residues Phe112–Ser142 the composition is skewed to basic and acidic residues. The R3H domain occupies Arg168 to Thr231. Phosphoserine is present on residues Ser187 and Ser262. Positions Arg232–Ser302 constitute an SUZ domain. The tract at residues Asp267 to Glu287 is disordered. A Phosphoserine modification is found at Ser302. Residues Arg331–Arg370 are disordered. 2 stretches are compositionally biased toward polar residues: residues Gly338–Glu349 and Trp360–Arg370. 3 positions are modified to phosphoserine: Ser380, Ser381, and Ser393. Disordered stretches follow at residues Val387–Gly439, Gln490–His537, Tyr583–Ser625, and Glu797–Pro825. Over residues Gly391–Ser422 the composition is skewed to low complexity. Pro residues-rich tracts occupy residues Pro519 to Gln532 and Ala588 to Pro611. The span at Glu797–Gln817 shows a compositional bias: polar residues. Arg929 bears the Asymmetric dimethylarginine; alternate mark. Omega-N-methylarginine; alternate is present on Arg929. A disordered region spans residues Pro941–Gly977. The span at His960–Lys969 shows a compositional bias: basic residues. Residue Ser973 is modified to Phosphoserine.

The chain is R3H domain-containing protein 1 (R3HDM1) from Homo sapiens (Human).